We begin with the raw amino-acid sequence, 337 residues long: MYQLSHTGKYPKTALNLRVRQITYQGIGINAYEFVREDGGELEEFTAGAHVDLYFRDGRVRQYSLCNDPAERRRYLIAVLRDDNGRGGSIAIHERVHTQRLVAVGHPRNNFPLIEGAPHQVLLAGGIGITPLKAMVHRLERMGADYTLHYCAKSSAHAAFQEELAPMAAKGRVIMHFDGGNPAKGLDIAALLRRYEPGWQLYYCGPPGFMEACTRACTHWPAEAVHFEYFVGAPVLPDDGVPQDIGSDALALGFQIKIASTGTVLTVPNDKSIAQVLGEHGIEVPTSCQSGLCGTCKVRYLAGDVEHRDYLLSAEARTQFLTTCVSRSKGATLVLDL.

The region spanning 9–114 is the FAD-binding FR-type domain; that stretch reads KYPKTALNLR…GHPRNNFPLI (106 aa). The 84-residue stretch at 254–337 folds into the 2Fe-2S ferredoxin-type domain; that stretch reads FQIKIASTGT…SKGATLVLDL (84 aa). [2Fe-2S] cluster is bound by residues C288, C293, C296, and C324.

Belongs to the PDR/VanB family. This two-component enzyme is composed of an oxygenase (MdpJ) and a reductase (MdpK). Requires [2Fe-2S] cluster as cofactor.

Reductase component of a two-component system involved in the degradation of tertiary alcohols such as tert-butyl alcohol (TBA) and tert-amyl alcohol (TAA). MdpK probably provides electrons via its [2Fe-2S] iron-sulfur cluster to the MdpJ oxygenase subunit. The protein is Tert-butanol monooxygenase / tert-amyl alcohol desaturase reductase subunit of Aquincola tertiaricarbonis.